A 1057-amino-acid polypeptide reads, in one-letter code: Outer capsid protein VP2 (1057 aa).

It belongs to the orbivirus VP2 family.

The protein resides in the virion. In terms of biological role, the VP2 protein is one of the two proteins (with VP5) which constitute the virus particle outer capsid. It is the major target of the host immunogenic response. This is Outer capsid protein VP2 (Segment-2) from Anas (ducks).